Here is a 476-residue protein sequence, read N- to C-terminus: Ubiquinone biosynthesis monooxygenase COQ6, mitochondrial (476 aa).

A mitochondrion-targeting transit peptide spans 1 to 42; it reads MAARIGPMAGLLCVRWWSTAQLAARGGPLVACRRWTSSSTDS.

The protein belongs to the UbiH/COQ6 family. Component of a multi-subunit COQ enzyme complex, composed of at least COQ3, COQ4, COQ5, COQ6, COQ7 and COQ9. Interacts with COQ8B and COQ7. The cofactor is FAD. In the kidney, expressed almost exclusively in glomerular podocytes. In the inner ear, expressed in the spiral ganglion, as well as in stria vascularis and spiral ligament cells.

The protein resides in the mitochondrion inner membrane. It localises to the golgi apparatus. It is found in the cell projection. It carries out the reaction 4-hydroxy-3-(all-trans-decaprenyl)benzoate + 2 reduced [2Fe-2S]-[ferredoxin] + O2 + 2 H(+) = 3,4-dihydroxy-5-(all-trans-decaprenyl)benzoate + 2 oxidized [2Fe-2S]-[ferredoxin] + H2O. The catalysed reaction is 2-methoxy-6-(all-trans-decaprenyl)phenol + 2 reduced [2Fe-2S]-[ferredoxin] + O2 + 2 H(+) = 2-methoxy-6-(all-trans-decaprenyl)benzene-1,4-diol + 2 oxidized [2Fe-2S]-[ferredoxin] + H2O. Its pathway is cofactor biosynthesis; ubiquinone biosynthesis. FAD-dependent monooxygenase required for two non-consecutive steps during ubiquinone biosynthesis. Required for the C5-ring hydroxylation during ubiquinone biosynthesis by catalyzing the hydroxylation of 4-hydroxy-3-(all-trans-decaprenyl)benzoic acid to 3,4-dihydroxy-5-(all-trans-decaprenyl)benzoic acid. Also acts downstream of COQ4, for the C1-hydroxylation during ubiquinone biosynthesis by catalyzing the hydroxylation of 2-methoxy-6-(all-trans-decaprenyl)phenol to 2-methoxy-6-(all-trans-decaprenyl)benzene-1,4-diol. The electrons required for the hydroxylation reaction are funneled indirectly to COQ6 from NADPH via a ferredoxin/ferredoxin reductase system composed of FDX2 and FDXR. This Rattus norvegicus (Rat) protein is Ubiquinone biosynthesis monooxygenase COQ6, mitochondrial.